The primary structure comprises 635 residues: Threonine--tRNA ligase (635 aa).

The TGS domain maps to 1-61; sequence MINISLSDGS…ENNCKLRILT (61 aa). The segment at 242–533 is catalytic; the sequence is DHRKLGRELD…LIEEYAGCFP (292 aa). Cysteine 333, histidine 384, and histidine 510 together coordinate Zn(2+).

This sequence belongs to the class-II aminoacyl-tRNA synthetase family. As to quaternary structure, homodimer. Zn(2+) is required as a cofactor.

The protein localises to the cytoplasm. The enzyme catalyses tRNA(Thr) + L-threonine + ATP = L-threonyl-tRNA(Thr) + AMP + diphosphate + H(+). Its function is as follows. Catalyzes the attachment of threonine to tRNA(Thr) in a two-step reaction: L-threonine is first activated by ATP to form Thr-AMP and then transferred to the acceptor end of tRNA(Thr). Also edits incorrectly charged L-seryl-tRNA(Thr). The chain is Threonine--tRNA ligase from Rickettsia canadensis (strain McKiel).